The chain runs to 545 residues: Thermosome subunit alpha (545 aa).

The protein belongs to the TCP-1 chaperonin family. Forms a Heterooligomeric complex of two stacked eight-membered rings.

In terms of biological role, molecular chaperone; binds unfolded polypeptides in vitro, and has a weak ATPase activity. In Archaeoglobus fulgidus (strain ATCC 49558 / DSM 4304 / JCM 9628 / NBRC 100126 / VC-16), this protein is Thermosome subunit alpha (thsA).